The sequence spans 364 residues: Peptidoglycan transport system permease protein YejB (364 aa).

The next 6 membrane-spanning stretches (helical) occupy residues 9–29, 134–154, 171–191, 219–239, 283–303, and 325–345; these read LALM…VIQF, SASL…PLGI, IIII…IVLF, IIDY…SAFA, IVIA…SLLI, and YPIV…VGLL. The 220-residue stretch at 131–350 folds into the ABC transmembrane type-1 domain; the sequence is LPVSASLGFW…VVGLLSDLIY (220 aa).

This sequence belongs to the binding-protein-dependent transport system permease family. The complex is composed of one ATP-binding protein (YejF), two transmembrane proteins (YejB and YejE) and a solute-binding protein (YepA or YejA).

It is found in the cell inner membrane. In terms of biological role, part of the ABC transporter complex YejBEF-YepA involved in the uptake of muropeptides, the breakdown products of cell wall peptidoglycan. The import of muropeptides into the cell enables peptidoglycan recycling, which is vital for cell wall integrity in this bacterium. Is also probably part of the ABC transporter complex YejABEF, which is likely involved in broad-spectrum peptide import. Responsible for the translocation of the substrate across the membrane. This is Peptidoglycan transport system permease protein YejB from Agrobacterium fabrum (strain C58 / ATCC 33970) (Agrobacterium tumefaciens (strain C58)).